A 759-amino-acid chain; its full sequence is LON peptidase N-terminal domain and RING finger protein 3 (759 aa).

A disordered region spans residues 1–69; that stretch reads MESVRIEQML…PGTSTPESKV (69 aa). Over residues 57–66 the composition is skewed to polar residues; the sequence is EQSPGTSTPE. The TPR 1 repeat unit spans residues 67 to 100; sequence SKVLLTQADALASRGRIREALEVYRQLSERQQLV. An RING-type 1 zinc finger spans residues 158-196; it reads CRKCHGFLSDPVSLSCGHTFCKLCLERGRAADRRCALCG. TPR repeat units follow at residues 243 to 276, 278 to 310, and 312 to 344; these read ASQL…APND, LLYS…RPMG, and KAHF…DGKN. The tract at residues 360–454 is disordered; it reads HCSSQEEAAA…TDQGDKPALS (95 aa). Basic and acidic residues predominate over residues 380-393; it reads AKVKGDGQQHHMKD. Residues 467 to 505 form an RING-type 2 zinc finger; the sequence is CALCMRLFYEPVTTPCGHTFCLKCLERCLDHNAKCPLCK. The Lon N-terminal domain occupies 546 to 755; that stretch reads MEELSNLNKN…GIRRVLAFIS (210 aa).

The chain is LON peptidase N-terminal domain and RING finger protein 3 (LONRF3) from Homo sapiens (Human).